We begin with the raw amino-acid sequence, 360 residues long: Codeine O-demethylase (360 aa).

In terms of domain architecture, Fe2OG dioxygenase spans G211–S311. Y220 contacts 2-oxoglutarate. Residues H235, D237, and H292 each contribute to the Fe cation site. 2-oxoglutarate contacts are provided by R302 and S304.

Belongs to the iron/ascorbate-dependent oxidoreductase family. L-ascorbate is required as a cofactor. It depends on Fe cation as a cofactor. Mainly expressed in stems, capsules and leaves and, to a lower extent, in roots.

It carries out the reaction codeine + 2-oxoglutarate + O2 = morphine + formaldehyde + succinate + CO2. It catalyses the reaction thebaine + 2-oxoglutarate + O2 = oripavine + formaldehyde + succinate + CO2. The enzyme catalyses (S)-scoulerine + 2-oxoglutarate + O2 = (S)-3-O-demethylscoulerine + formaldehyde + succinate + CO2. The catalysed reaction is thebaine + 2-oxoglutarate + O2 = neopinone + formaldehyde + succinate + CO2. It carries out the reaction (S)-reticuline + 2-oxoglutarate + O2 = (S)-6-O-demethylreticuline + formaldehyde + succinate + CO2. It catalyses the reaction (S)-tetrahydropalmatine + S-adenosyl-L-methionine = (S)-cis-N-methyltetrahydropalmatine + S-adenosyl-L-homocysteine. The protein operates within alkaloid biosynthesis; morphine biosynthesis. Moderate substrate inhibition. Not inhibited in vitro by acylcyclohexanediones. Its function is as follows. Non-heme dioxygenase involved in biosynthesis of morphinan-type benzylisoquinoline and opiate alkaloids natural products. Mediates the conversion of codeine to morphine. Also catalyzes, with lower efficiency, the 3-O-demethylation of thebaine to oripavine and of (S)-scoulerine to 3-O-demethylscoulerine. Supports, with a lower turnover, the conversion of codeinone to morphinone, of thebaine to neopinone, and of neopine to neomorphine. Supports dealkylation reactions such as O,O-demethylenation in the metabolism of protopine, benzo[c]phenanthridine, and rhoeadine alkaloids; cleaves a methylenedioxy bridge leaving two hydroxyl groups. Catalyzes the O,O-demethylenation of methylenedioxy bridges on protopine alkaloids such as allocryptopine, cryptopine and protopine. No activity with (S)-reticuline, salutaridine, papaverine, (S)-corytuberine, oripavine, pavine or noscapine. The protein is Codeine O-demethylase of Papaver somniferum (Opium poppy).